Here is a 205-residue protein sequence, read N- to C-terminus: Recombination protein RecR (205 aa).

A C4-type zinc finger spans residues 60–75; that stretch reads CKVCHNISDTETCQIC. The Toprim domain occupies 83-178; that stretch reads SMVCVVENIR…KLSVLARGVS (96 aa).

The protein belongs to the RecR family.

In terms of biological role, may play a role in DNA repair. It seems to be involved in an RecBC-independent recombinational process of DNA repair. It may act with RecF and RecO. This Bacteroides fragilis (strain ATCC 25285 / DSM 2151 / CCUG 4856 / JCM 11019 / LMG 10263 / NCTC 9343 / Onslow / VPI 2553 / EN-2) protein is Recombination protein RecR.